Here is a 156-residue protein sequence, read N- to C-terminus: Transcriptional regulator MraZ (156 aa).

2 consecutive SpoVT-AbrB domains span residues 7–64 (KERH…EPSV) and 93–136 (LEMV…EPAR).

Belongs to the MraZ family. In terms of assembly, forms oligomers.

The protein resides in the cytoplasm. Its subcellular location is the nucleoid. In Chlorobium phaeovibrioides (strain DSM 265 / 1930) (Prosthecochloris vibrioformis (strain DSM 265)), this protein is Transcriptional regulator MraZ.